Consider the following 490-residue polypeptide: Capsid protein (490 aa).

Residues 79–143 (GETSEEESDS…TQPKTIPGQK (65 aa)) form a disordered region. A compositionally biased stretch (acidic residues) spans 81-94 (TSEEESDSGEEPEF). Basic and acidic residues predominate over residues 95-111 (EQVRMDRTGGTEIPKEE). The Nuclear localization signal motif lies at 122-125 (RKRK). The CCHC-type zinc-finger motif lies at 411-428 (CRCWICNIEGHYANECPN). The segment at 464–490 (YKEEEEETSTEEDDGSSTSEDSDSESD) is disordered. Acidic residues predominate over residues 465–490 (KEEEEETSTEEDDGSSTSEDSDSESD).

This sequence belongs to the caulimoviridae capsid protein family. As to quaternary structure, interacts (via nuclear localization signal) with host importin alpha.

The protein resides in the virion. Its subcellular location is the host nucleus. In terms of biological role, self assembles to form an icosahedral capsid, about 50 nm in diameter, nm, composed of 420 subunits of the viral capsid protein. The capsid encapsulates the genomic dsDNA. Following virus entry into host cell, provides nuclear import of the viral genome. Virus particles do not enter the nucleus, but dock at the nuclear membrane through the interaction with host importins. The sequence is that of Capsid protein from Arabidopsis thaliana (Mouse-ear cress).